The primary structure comprises 273 residues: HTH-type transcriptional activator RhaS (273 aa).

Positions 174 to 272 constitute an HTH araC/xylS-type domain; it reads YQLLDWLQNN…SQSPRDLRSQ (99 aa). 2 consecutive DNA-binding regions (H-T-H motif) follow at residues 191–212 and 239–262; these read PELADRFALPLRTLHRQLKNKT and VTDIAYLCGFGDSNHFSTLFKREF.

In terms of assembly, binds DNA as a dimer.

It is found in the cytoplasm. In terms of biological role, activates expression of the rhaBAD and rhaT operons. This is HTH-type transcriptional activator RhaS from Yersinia pseudotuberculosis serotype I (strain IP32953).